A 345-amino-acid polypeptide reads, in one-letter code: Type II restriction enzyme HgiCI (345 aa).

The enzyme catalyses Endonucleolytic cleavage of DNA to give specific double-stranded fragments with terminal 5'-phosphates.. A P subtype restriction enzyme that recognizes the double-stranded sequence 5'-GGYRCC-3' and cleaves after G-1. The polypeptide is Type II restriction enzyme HgiCI (hgiCIR) (Herpetosiphon aurantiacus (Herpetosiphon giganteus)).